The sequence spans 510 residues: NAD(P)H-quinone oxidoreductase subunit 2 A, chloroplastic (510 aa).

The next 14 helical transmembrane spans lie at Phe31–Thr51, Trp59–Trp79, Ile99–Ile119, Met124–Cys144, Leu149–Tyr169, Leu184–Leu204, Ile229–Phe249, Pro261–Thr281, Trp295–Ile315, Met323–Asp343, Tyr354–Leu374, Ala395–Phe415, Leu418–Leu438, and Met484–Ile504.

Belongs to the complex I subunit 2 family. In terms of assembly, NDH is composed of at least 16 different subunits, 5 of which are encoded in the nucleus.

Its subcellular location is the plastid. The protein resides in the chloroplast thylakoid membrane. It carries out the reaction a plastoquinone + NADH + (n+1) H(+)(in) = a plastoquinol + NAD(+) + n H(+)(out). The catalysed reaction is a plastoquinone + NADPH + (n+1) H(+)(in) = a plastoquinol + NADP(+) + n H(+)(out). NDH shuttles electrons from NAD(P)H:plastoquinone, via FMN and iron-sulfur (Fe-S) centers, to quinones in the photosynthetic chain and possibly in a chloroplast respiratory chain. The immediate electron acceptor for the enzyme in this species is believed to be plastoquinone. Couples the redox reaction to proton translocation, and thus conserves the redox energy in a proton gradient. In Oryza sativa subsp. japonica (Rice), this protein is NAD(P)H-quinone oxidoreductase subunit 2 A, chloroplastic.